The primary structure comprises 224 residues: Type VII secretion system protein EsaE (224 aa).

As to quaternary structure, interacts with EssD.

In terms of biological role, component of the type VII secretion system (Ess). Plays a role in Esx protein secretion. Plays an essential role in the processing and secretion of EssD. The chain is Type VII secretion system protein EsaE from Staphylococcus aureus (strain USA300).